The following is a 152-amino-acid chain: Deoxyuridine 5'-triphosphate nucleotidohydrolase (152 aa).

Residues Arg71–Gly73, Asn84, Leu88–Asp90, and Met98 each bind substrate.

Belongs to the dUTPase family. Requires Mg(2+) as cofactor.

The enzyme catalyses dUTP + H2O = dUMP + diphosphate + H(+). The protein operates within pyrimidine metabolism; dUMP biosynthesis; dUMP from dCTP (dUTP route): step 2/2. In terms of biological role, this enzyme is involved in nucleotide metabolism: it produces dUMP, the immediate precursor of thymidine nucleotides and it decreases the intracellular concentration of dUTP so that uracil cannot be incorporated into DNA. The protein is Deoxyuridine 5'-triphosphate nucleotidohydrolase of Salmonella arizonae (strain ATCC BAA-731 / CDC346-86 / RSK2980).